The sequence spans 114 residues: Histone H3-5 (114 aa).

Residues 1–29 (NTGAKAPRKQLANKAARKSTNVNAVSGVK) form a disordered region.

It belongs to the histone H3 family. The nucleosome is a histone octamer containing two molecules each of H2A, H2B, H3 and H4 assembled in one H3-H4 heterotetramer and two H2A-H2B heterodimers. The octamer wraps approximately 147 bp of DNA.

Its subcellular location is the nucleus. It is found in the chromosome. Core component of nucleosome. Nucleosomes wrap and compact DNA into chromatin, limiting DNA accessibility to the cellular machineries which require DNA as a template. Histones thereby play a central role in transcription regulation, DNA repair, DNA replication and chromosomal stability. DNA accessibility is regulated via a complex set of post-translational modifications of histones, also called histone code, and nucleosome remodeling. The sequence is that of Histone H3-5 (H3-5) from Stylonychia lemnae (Ciliate).